A 393-amino-acid chain; its full sequence is Putative baseplate protein gp29 (393 aa).

This sequence belongs to the P2likevirus gpJ protein family.

It localises to the virion. In terms of biological role, putative baseplate protein. This Haemophilus phage HP1 (strain HP1c1) (Bacteriophage HP1) protein is Putative baseplate protein gp29.